Here is a 457-residue protein sequence, read N- to C-terminus: ADP-dependent glucose/glucosamine kinase (457 aa).

The ADPK domain maps to 5-457 (TNWESLYEKA…SAFVSEFSLH (453 aa)). Residues aspartate 37, glutamate 91, 115-116 (GQ), and histidine 179 each bind D-glucose. Glutamate 269 contacts Mg(2+). ADP is bound at residue asparagine 295. Position 298 (glutamate 298) interacts with Mg(2+). ADP contacts are provided by residues 345-346 (HT), valine 432, and glycine 442. Aspartate 443 provides a ligand contact to D-glucose. Aspartate 443 contacts Mg(2+). Aspartate 443 serves as the catalytic Proton acceptor.

Belongs to the ADP-dependent glucokinase family. Mg(2+) serves as cofactor.

The protein resides in the cytoplasm. The catalysed reaction is D-glucose + ADP = D-glucose 6-phosphate + AMP + H(+). It catalyses the reaction D-glucosamine + ADP = D-glucosamine 6-phosphate + AMP + H(+). Its pathway is carbohydrate degradation; glycolysis. With respect to regulation, inhibited by 8-bromoadenosine phosphate (8-Br-AMP). In terms of biological role, catalyzes the ADP-dependent phosphorylation of D-glucose to D-glucose 6-phosphate and glucosamine to glucosamine 6-phosphate. The protein is ADP-dependent glucose/glucosamine kinase of Pyrococcus horikoshii (strain ATCC 700860 / DSM 12428 / JCM 9974 / NBRC 100139 / OT-3).